Consider the following 736-residue polypeptide: Gingipain R2 (736 aa).

The signal sequence occupies residues 1 to 24 (MKKNFSRIVSIVAFSSLLGGMAFA). Positions 25 to 229 (QPAERGRNPQ…SVFMNYEATR (205 aa)) are excised as a propeptide. 7 residues coordinate Ca(2+): Asp-307, Val-329, Asp-332, Tyr-334, Glu-336, Glu-390, and His-395. His-440 acts as the Proton donor in catalysis. Residue Cys-473 is the Nucleophile of the active site. Ca(2+)-binding residues include Phe-478, Glu-487, Asp-521, Glu-522, Glu-525, His-531, Asp-613, and Glu-639.

This sequence belongs to the peptidase C25 family.

It localises to the secreted. It carries out the reaction Hydrolysis of proteins and small molecule substrates, with a preference for Arg in P1.. Its function is as follows. Thiol protease. Acts synergistically with RgpA to catalyze the maturation of fimbrial subunits, such as FimA. Its proteolytic activity is a major factor in both periodontal tissue destruction and in evasion of host defense mechanisms. This chain is Gingipain R2, found in Porphyromonas gingivalis (strain ATCC 33277 / DSM 20709 / CIP 103683 / JCM 12257 / NCTC 11834 / 2561).